The chain runs to 149 residues: UPF0178 protein VV1_1847 (149 aa).

The protein belongs to the UPF0178 family.

This chain is UPF0178 protein VV1_1847, found in Vibrio vulnificus (strain CMCP6).